A 555-amino-acid polypeptide reads, in one-letter code: B3 domain-containing protein REM10 (555 aa).

4 DNA-binding regions (TF-B3) span residues 11–103 (NPQF…LGPS), 150–247 (CFVA…FPMT), 276–372 (SFVA…LPLN), and 460–554 (SQNR…FCSK).

The protein localises to the nucleus. The polypeptide is B3 domain-containing protein REM10 (REM10) (Arabidopsis thaliana (Mouse-ear cress)).